A 118-amino-acid chain; its full sequence is Nucleoid-associated protein CTN_1899 (118 aa).

Belongs to the YbaB/EbfC family. As to quaternary structure, homodimer.

It is found in the cytoplasm. The protein resides in the nucleoid. Its function is as follows. Binds to DNA and alters its conformation. May be involved in regulation of gene expression, nucleoid organization and DNA protection. In Thermotoga neapolitana (strain ATCC 49049 / DSM 4359 / NBRC 107923 / NS-E), this protein is Nucleoid-associated protein CTN_1899.